The sequence spans 418 residues: Somatostatin receptor type 3 (418 aa).

Positions 1-21 are disordered; sequence MDMLHPSSVSTTSEPENASSA. The Extracellular portion of the chain corresponds to 1–43; it reads MDMLHPSSVSTTSEPENASSAWPPDATLGNVSAGPSPAGLAVS. Polar residues predominate over residues 7-20; it reads SSVSTTSEPENASS. 2 N-linked (GlcNAc...) asparagine glycosylation sites follow: asparagine 17 and asparagine 30. The chain crosses the membrane as a helical span at residues 44-69; the sequence is GVLIPLVYLVVCVVGLLGNSLVIYVV. Topologically, residues 70–79 are cytoplasmic; that stretch reads LRHTASPSVT. A helical membrane pass occupies residues 80-101; it reads NVYILNLALADELFMLGLPFLA. The Extracellular portion of the chain corresponds to 102–116; it reads AQNALSYWPFGSLMC. An intrachain disulfide couples cysteine 116 to cysteine 191. Residues 117 to 138 form a helical membrane-spanning segment; the sequence is RLVMAVDGINQFTSIFCLTVMS. The Cytoplasmic portion of the chain corresponds to 139 to 161; sequence VDRYLAVVHPTRSARWRTAPVAR. A helical transmembrane segment spans residues 162–181; the sequence is TVSAAVWVASAVVVLPVVVF. Residues 182–205 are Extracellular-facing; it reads SGVPRGMSTCHMQWPEPAAAWRAG. A helical membrane pass occupies residues 206 to 231; sequence FIIYTAALGFFGPLLVICLCYLLIVV. The Cytoplasmic segment spans residues 232–257; that stretch reads KVRSAGRRVWAPSCQRRRRSERRVTR. A helical membrane pass occupies residues 258 to 279; sequence MVVAVVALFVLCWMPFYVLNIV. Residues 280-293 lie on the Extracellular side of the membrane; it reads NVVCPLPEEPAFFG. The chain crosses the membrane as a helical span at residues 294 to 316; it reads LYFLVVALPYANSCANPILYGFL. At 317–418 the chain is on the cytoplasmic side; the sequence is SYRFKQGFRR…KSSTMRISYL (102 aa). 2 positions are modified to phosphoserine: serine 332 and serine 337. The segment at 335–418 is disordered; it reads VRSQEPTVGP…KSSTMRISYL (84 aa). Threonine 348 is subject to Phosphothreonine. Acidic residues predominate over residues 348-360; it reads TEEEDEEEEDGEE. Basic and acidic residues predominate over residues 361–371; it reads SREGGKGKEMN. Polar residues-rich tracts occupy residues 373-385 and 395-418; these read RVSQ…TSGQ and KEQQ…ISYL.

It belongs to the G-protein coupled receptor 1 family. In terms of assembly, homodimer and heterodimer with SSTR2. Heterodimerization with SSTR2 inactivates SSTR3 receptor function. Phosphorylated. Phosphorylation increases upon somatostatin binding. In terms of tissue distribution, brain, pituitary and pancreas.

The protein localises to the cell membrane. Receptor for somatostatin-14 and -28. This receptor is coupled via pertussis toxin sensitive G proteins to inhibition of adenylyl cyclase. The sequence is that of Somatostatin receptor type 3 (SSTR3) from Homo sapiens (Human).